The following is a 466-amino-acid chain: Ras GTPase-activating protein-binding protein 1 (466 aa).

The NTF2 domain occupies 11–133 (VGREFVRQYY…FYVHNDIFRY (123 aa)). Glycyl lysine isopeptide (Lys-Gly) (interchain with G-Cter in ubiquitin) cross-links involve residues Lys-36, Lys-50, Lys-59, Lys-64, Lys-76, and Lys-123. The interval 142–225 (VTEPQEESEE…EPVLEETAPE (84 aa)) is acidic disordered region. Thr-143 is modified (phosphothreonine). Disordered regions lie at residues 144-172 (EPQEESEEEVEEPEERQQTPEVVPDDSGT) and 184-243 (EEHL…QTVQ). 2 stretches are compositionally biased toward acidic residues: residues 145–157 (PQEESEEEVEEPE) and 185–206 (EHLEEPVAEPEPDPEPEPEQEP). Position 149 is a phosphoserine (Ser-149). Ser-231, Ser-232, Ser-250, and Ser-253 each carry phosphoserine. The disordered stretch occupies residues 255–329 (TSKNLPPSGA…REAGEQGDIE (75 aa)). Basic and acidic residues-rich tracts occupy residues 297–307 (PQRDQRVREQR) and 318–329 (PIREAGEQGDIE). Residues 340–415 (HQLFIGNLPH…VRLNVEEKKT (76 aa)) enclose the RRM domain. Glycyl lysine isopeptide (Lys-Gly) (interchain with G-Cter in ubiquitin) cross-links involve residues Lys-353 and Lys-357. A Phosphoserine modification is found at Ser-373. Lys-376 participates in a covalent cross-link: Glycyl lysine isopeptide (Lys-Gly) (interchain with G-Cter in ubiquitin). Position 376 is an N6-acetyllysine; alternate (Lys-376). Residue Lys-376 forms a Glycyl lysine isopeptide (Lys-Gly) (interchain with G-Cter in SUMO2); alternate linkage. Residue Lys-393 forms a Glycyl lysine isopeptide (Lys-Gly) (interchain with G-Cter in ubiquitin); alternate linkage. Residues 410–466 (VEEKKTRAAREGDRRDNRLRGPGGPRGGLGGGMRGPPRGGMVQKPGFGVGRGLAPRQ) are RG-rich region. Residues 413–428 (KKTRAAREGDRRDNRL) show a composition bias toward basic and acidic residues. Residues 413-466 (KKTRAAREGDRRDNRLRGPGGPRGGLGGGMRGPPRGGMVQKPGFGVGRGLAPRQ) form a disordered region. Residue Arg-429 is modified to Asymmetric dimethylarginine. The segment covering 430–447 (GPGGPRGGLGGGMRGPPR) has biased composition (gly residues). Arg-435 carries the asymmetric dimethylarginine; alternate modification. Arg-435 is modified (dimethylated arginine; alternate). Omega-N-methylarginine; alternate is present on Arg-435. Residue Arg-447 is modified to Omega-N-methylarginine. Arg-460 carries the post-translational modification Dimethylated arginine; alternate. Omega-N-methylarginine; alternate is present on Arg-460. Arg-465 bears the Omega-N-methylarginine mark.

Homodimer and oligomer. Component of a TAU mRNP complex, at least composed of IGF2BP1, ELAVL4 and G3BP1. Binds to the SH3 domain of Ras GTPase-activating protein (RASA1) in proliferating cells. No interaction in quiescent cells. Interacts (via NTF2 domain) with USP10; inhibiting stress granule formation by lowering G3BP1 valence. Interacts (via NTF2 domain) with CAPRIN1; promoting stress granule formation by lowering the saturation-concentration of G3BP1. Interacts (via NTF2 domain) with UBAP2L; promoting stress granule formation. Associates (via RG-rich region) with 40S ribosome subunits. Interacts with RPTOR and SPAG5; this complex is increased by oxidative stress. Interacts with ATXN2L. Interacts with STYXL1. Interacts with CGAS (via N-terminus); this interaction promotes the DNA-binding and activation of CGAS. Interacts (via C-terminus) with RIGI. Interacts with PABPC1. Interacts with QKI (isoforms QKI6 and QKI7); directing N(7)-methylguanine-containing mRNAs to stress granules. As to quaternary structure, (Microbial infection) Interacts with Semliki forest virus non-structural protein 3 (via C-terminus); this interaction inhibits the formation of stress granules on viral mRNAs and the nsp3-G3BP1 complexes bind viral RNAs and probably orchestrate the assembly of viral replication complexes. In terms of assembly, (Microbial infection) Interacts with Chikungunya virus non-structural protein 3 (via C-terminus); this interaction inhibits the formation of stress granules on viral mRNAs and the nsp3-G3BP1 complexes bind viral RNAs and probably orchestrate the assembly of viral replication complexes. (Microbial infection) Interacts with Sindbis virus non-structural protein 3 (via C-terminus); this interaction inhibits the formation of stress granules on viral mRNAs and the nsp3-G3BP1 complexes bind viral RNAs and probably orchestrate the assembly of viral replication complexes. As to quaternary structure, (Microbial infection) Interacts with Zika virus capsid protein C; this interaction is probably linked to the inhibition of stress granules formation by the virus. In terms of assembly, (Microbial infection) Interacts with reovirus type 2 protein sigma-NS; this interaction induces the relocalization of G3BP1 to the outer periphery of sigma-NS/mu-Ns viral factories and is probably involved in the suppression of the integrated stress response by the virus. (Microbial infection) Interacts with SARS-CoV-2 N protein; the interaction is enhanced by host HDAC6 which deacetylates the viral N protein and promotes N protein association with G3BP1, disrupting stress granule formation and facilitating viral replication. Interacts with HDAC6; the interaction increases during SARS-CoV-2 infection. Mg(2+) is required as a cofactor. Phosphorylation of the acidic disordered region regulates stress granule assembly. RASA1-dependent phosphorylation of Ser-149 induces a conformational change that prevents self-association. Dephosphorylation after HRAS activation is required for stress granule assembly. Ser-149 phosphorylation induces partial nuclear localization. Post-translationally, ubiquitinated by TRIM21 via 'Lys-63'-linked polyubiquitination in the NTF2 domain in response to heat shock, leading to stress granule disassembly: ubiquitination promotes interaction with the FAF2 adapter, followed by interaction with VCP, which extracts G3BP1 from stress granules, leading to stress granule disassembly. In case of prolonged stress, ubiquitination by TRIM21 leads to autophagy-dependent degradation of G3BP1 via recruitment of ubiquitinated G3BP1 by SQSTM1 and/or CALCOCO2 to autophagosomes. In terms of processing, (Microbial infection) Cleaved by human enterovirus 71; this cleavage induces the disassembly of cytoplasmic stress granules. Cleaved by Foot-and-mouth disease virus; this cleavage suppresses the formation of cytoplasmic stress granules. Arg-435 is dimethylated, probably to asymmetric dimethylarginine. Post-translationally, (Microbial infection) Cleaved by Encephalomyocarditis virus protease 3C; this cleavage suppresses the formation of cytoplasmic stress granules. In terms of tissue distribution, ubiquitous.

The protein resides in the cytoplasm. Its subcellular location is the cytosol. It localises to the perikaryon. It is found in the stress granule. The protein localises to the nucleus. The catalysed reaction is ATP + H2O = ADP + phosphate + H(+). Under physiological conditions, G3BP1 adopts a compact state that is stabilized by intramolecular interactions between the RG-rich and the acidic regions that inhibit phase separation. Upon stress, polysomes disassemble and mRNAs are released in an unfolded protein-free state. Binding of unfolded mRNA to G3BP1 outcompetes the intramolecular interactions and RNA-bound G3BP1 adopts an expanded conformation in which the RG-rich region becomes exposed to engage in protein-protein and protein-RNA interactions, allowing physical cross-linking of RNA molecules to form protein-RNA condensates, leading to liquid-liquid phase separation (LLPS). Its function is as follows. Protein involved in various processes, such as stress granule formation and innate immunity. Plays an essential role in stress granule formation. Stress granules are membraneless compartments that store mRNAs and proteins, such as stalled translation pre-initiation complexes, in response to stress. Promotes formation of stress granules phase-separated membraneless compartment by undergoing liquid-liquid phase separation (LLPS) upon unfolded RNA-binding: functions as a molecular switch that triggers RNA-dependent LLPS in response to a rise in intracellular free RNA concentrations. Also acts as an ATP- and magnesium-dependent helicase: unwinds DNA/DNA, RNA/DNA, and RNA/RNA substrates with comparable efficiency. Acts unidirectionally by moving in the 5' to 3' direction along the bound single-stranded DNA. Unwinds preferentially partial DNA and RNA duplexes having a 17 bp annealed portion and either a hanging 3' tail or hanging tails at both 5'- and 3'-ends. Plays an essential role in innate immunity by promoting CGAS and RIGI activity. Participates in the DNA-triggered cGAS/STING pathway by promoting the DNA binding and activation of CGAS. Triggers the condensation of cGAS, a process probably linked to the formation of membrane-less organelles. Also enhances RIGI-induced type I interferon production probably by helping RIGI at sensing pathogenic RNA. May also act as a phosphorylation-dependent sequence-specific endoribonuclease in vitro: Cleaves exclusively between cytosine and adenine and cleaves MYC mRNA preferentially at the 3'-UTR. This Homo sapiens (Human) protein is Ras GTPase-activating protein-binding protein 1.